The following is a 541-amino-acid chain: Membrane protein insertase YidC (541 aa).

Helical transmembrane passes span 6 to 26, 356 to 376, 430 to 450, 463 to 483, and 498 to 518; these read FFLIIAIFLSIFLLWDKWEIT, IIHSWGYSIIILTLLIKLAFY, LPILVQIPVFISLYWVLLEMV, LSAPDPYYILPLIMGISMFIQ, and IMMALPFVFTIFFLWFPSGLV.

The protein belongs to the OXA1/ALB3/YidC family. Type 1 subfamily. Interacts with the Sec translocase complex via SecD. Specifically interacts with transmembrane segments of nascent integral membrane proteins during membrane integration.

Its subcellular location is the cell inner membrane. In terms of biological role, required for the insertion and/or proper folding and/or complex formation of integral membrane proteins into the membrane. Involved in integration of membrane proteins that insert both dependently and independently of the Sec translocase complex, as well as at least some lipoproteins. Aids folding of multispanning membrane proteins. The protein is Membrane protein insertase YidC of Vesicomyosocius okutanii subsp. Calyptogena okutanii (strain HA).